The following is a 490-amino-acid chain: Limb region 1 protein homolog (490 aa).

Topologically, residues methionine 1–arginine 19 are extracellular. A helical transmembrane segment spans residues glutamate 20–threonine 40. The Cytoplasmic portion of the chain corresponds to arginine 41 to phenylalanine 62. The helical transmembrane segment at leucine 63–isoleucine 83 threads the bilayer. Topologically, residues serine 84–asparagine 110 are extracellular. A helical transmembrane segment spans residues leucine 111–leucine 131. Residues glutamate 132–leucine 151 lie on the Cytoplasmic side of the membrane. The helical transmembrane segment at valine 152–isoleucine 172 threads the bilayer. The Extracellular segment spans residues aspartate 173–glutamate 187. A helical membrane pass occupies residues phenylalanine 188 to cysteine 208. Residues threonine 209–asparagine 291 are Cytoplasmic-facing. A coiled-coil region spans residues arginine 250–alanine 287. Residues leucine 292–valine 312 traverse the membrane as a helical segment. Residues alanine 313–serine 339 lie on the Extracellular side of the membrane. A helical transmembrane segment spans residues leucine 340 to valine 360. At serine 361 to threonine 383 the chain is on the cytoplasmic side. The chain crosses the membrane as a helical span at residues methionine 384 to methionine 404. The Extracellular segment spans residues serine 405–glycine 426. Residues asparagine 427 to valine 447 form a helical membrane-spanning segment. The Cytoplasmic segment spans residues arginine 448–leucine 490.

The protein belongs to the LIMR family. In terms of tissue distribution, widely expressed with strongest expression in heart and pancreas.

The protein localises to the membrane. Functionally, putative membrane receptor. The protein is Limb region 1 protein homolog (LMBR1) of Homo sapiens (Human).